The primary structure comprises 84 residues: Mu-conotoxin-like Cal 12.2d (84 aa).

An N-terminal signal peptide occupies residues 1–19 (MKLTCVLVVLLLVLPFGDL). A propeptide spanning residues 20 to 42 (ITTSNTEDNKRGATPWQNSLKAR) is cleaved from the precursor. Position 72 is a 6'-bromotryptophan (Trp72). Residue Pro77 is modified to 4-hydroxyproline. Residue Trp81 is modified to 6'-bromotryptophan.

The protein belongs to the conotoxin O1 superfamily. Post-translationally, contains 4 disulfide bonds. As to expression, expressed by the venom duct.

It localises to the secreted. Its function is as follows. Mu-conotoxins block voltage-gated sodium channels. This toxin reversibly blocks voltage-gated sodium channel in cephalopods, with no alteration in the voltage dependence of sodium conductance or on the kinetics of inactivation. This Californiconus californicus (California cone) protein is Mu-conotoxin-like Cal 12.2d.